The chain runs to 160 residues: Endoribonuclease YbeY (160 aa).

Zn(2+) is bound by residues H124, H128, and H134.

It belongs to the endoribonuclease YbeY family. Zn(2+) serves as cofactor.

It localises to the cytoplasm. In terms of biological role, single strand-specific metallo-endoribonuclease involved in late-stage 70S ribosome quality control and in maturation of the 3' terminus of the 16S rRNA. This is Endoribonuclease YbeY from Jannaschia sp. (strain CCS1).